We begin with the raw amino-acid sequence, 250 residues long: MPIMASTLYRDMLNFFRNQFASILLLALLTALISVVLGHALSPGSEQLMTLSDGTHLGDTAEMSLQQLVQQMSVEQQRVLLKASAAGTLAGLVGNVLLAGGLLTMIRQVSNRQPVSVLRAIGLSAPLLPRLLLLIFLTTLLVQLGLLLIIVPGILLAIAFSLAPVIATSDDLGAIKSMRQSSSLAFANLRLLAPAVLFWLLAKAAVLLLATQFTLVSSLVAVVLLNGLSNLISALLLIYLYRLYMLLRQA.

The next 6 helical transmembrane spans lie at 20 to 40 (FASILLLALLTALISVVLGHA), 86 to 106 (AGTLAGLVGNVLLAGGLLTMI), 121 to 141 (IGLSAPLLPRLLLLIFLTTLL), 146 to 166 (LLLIIVPGILLAIAFSLAPVI), 191 to 211 (LLAPAVLFWLLAKAAVLLLAT), and 219 to 239 (LVAVVLLNGLSNLISALLLIY).

The protein belongs to the UPF0259 family.

The protein resides in the cell inner membrane. In Sodalis glossinidius (strain morsitans), this protein is UPF0259 membrane protein SG1383.